A 448-amino-acid polypeptide reads, in one-letter code: Velvet complex subunit 2 (448 aa).

2 disordered regions span residues 1–153 (MNSA…SKIE) and 224–306 (EPGT…NGYG). A compositionally biased stretch (low complexity) spans 15–34 (PGPAYSSSAPPPIHTYQQHQ). Composition is skewed to pro residues over residues 35–44 (HPPPPLPPPS) and 52–61 (PPLPPPPSAP). Over residues 96-107 (APYQQSQPSQYP) the composition is skewed to low complexity. A compositionally biased stretch (pro residues) spans 116 to 132 (VPPPSQHDEPPPPPSSG). The Velvet domain maps to 155 to 431 (GSGWKYSLDV…ANQGIKIPIR (277 aa)). Residues 260 to 292 (QQSYGPAPSYPPSSSYGPPQQYYPRHSGYSAEP) show a composition bias toward low complexity.

This sequence belongs to the velvet family. VelB subfamily. In terms of assembly, component of the heterotrimeric velvet complex composed of LAE1, VE1 and VELB; VE1 acting as a bridging protein between LAE1 and VEL2. Interacts with VE1. Forms a heterodimeric complex with VOS1; the formation of the VELB-VOS1 complex is light-dependent.

It localises to the nucleus. The protein localises to the cytoplasm. Its function is as follows. Component of the velvet transcription factor complex that controls sexual/asexual developmental ratio in response to light, promoting sexual development in the darkness while stimulating asexual sporulation under illumination. The velvet complex acts as a global regulator for secondary metabolite gene expression. Component of the VELB-VOS1 heterodimeric complex that plays a dual role in activating genes associated with spore maturation and repressing certain development-associated genes. The VELB-VOS1 complex binds DNA through the DNA-binding domain of VOS1 that recognizes an 11-nucleotide consensus sequence 5'-CTGGCCGCGGC-3' consisting of two motifs in the promoters of key developmental regulatory genes. Controls the expression of the fumonisins gene cluster. Involved in cell wall integrity, cell surface hydrophobicity, hyphal polarity and conidiation pattern. Involved in oxidative stress resistance by positively regulating the transcription of the catalase-encoding gene CAT2. The sequence is that of Velvet complex subunit 2 from Gibberella moniliformis (strain M3125 / FGSC 7600) (Maize ear and stalk rot fungus).